A 416-amino-acid polypeptide reads, in one-letter code: Creatine kinase U-type, mitochondrial (416 aa).

The N-terminal 39 residues, M1–A39, are a transit peptide targeting the mitochondrion. Positions A40–A64 are cardiolipin-binding. The 87-residue stretch at R45–N131 folds into the Phosphagen kinase N-terminal domain. A Phosphoserine modification is found at S151. In terms of domain architecture, Phosphagen kinase C-terminal spans Y158–L400. Residue S161–R165 participates in ATP binding. Residue S196 is modified to Phosphoserine. T213 is subject to Phosphothreonine. Residue H224 coordinates ATP. S232 is modified (phosphoserine). Residues R269, R325, and R353–V358 contribute to the ATP site. The residue at position 355 (T355) is a Phosphothreonine. S365 bears the Phosphoserine mark. Residue D368 coordinates ATP.

This sequence belongs to the ATP:guanido phosphotransferase family. Exists as an octamer composed of four MTCK homodimers.

Its subcellular location is the mitochondrion inner membrane. The catalysed reaction is creatine + ATP = N-phosphocreatine + ADP + H(+). Its function is as follows. Reversibly catalyzes the transfer of phosphate between ATP and various phosphogens (e.g. creatine phosphate). Creatine kinase isoenzymes play a central role in energy transduction in tissues with large, fluctuating energy demands, such as skeletal muscle, heart, brain and spermatozoa. This Bos taurus (Bovine) protein is Creatine kinase U-type, mitochondrial (CKMT1).